The following is a 320-amino-acid chain: Apolipoprotein E (320 aa).

The signal sequence occupies residues 1–18; the sequence is MKVLWAAFLVAFLAGCQG. A run of 8 repeats spans residues 82–103, 104–125, 126–147, 148–169, 170–191, 192–213, 214–236, and 237–258. The segment at 82–199 is 8 X 22 AA approximate tandem repeats; the sequence is ALMDETMKEL…AERGVSAIRE (118 aa). Methionine sulfoxide is present on M145. A Phosphoserine modification is found at S149. The interval 160–170 is LDL and other lipoprotein receptors binding; sequence HLRKLRKRLLR. A heparin-binding site is contributed by 164-167; sequence LRKR. The tract at residues 212-293 is lipid-binding and lipoprotein association; the sequence is AATVGSSLAS…SWFEPLVEDM (82 aa). 232-239 contributes to the heparin binding site; the sequence is GERLRARM. Residues 269-320 are homooligomerization; it reads QQMRLQAEAFQARLKSWFEPLVEDMQRQWAGLVEKVQAAVGASATPVPSDNH. The specificity for association with VLDL stretch occupies residues 281 to 293; that stretch reads RLKSWFEPLVEDM.

The protein belongs to the apolipoprotein A1/A4/E family. As to quaternary structure, homotetramer. May interact with ABCA1; functionally associated with ABCA1 in the biogenesis of HDLs. May interact with APP/A4 amyloid-beta peptide; the interaction is extremely stable in vitro but its physiological significance is unclear. May interact with MAPT. May interact with MAP2. In the cerebrospinal fluid, interacts with secreted SORL1. Interacts with PMEL; this allows the loading of PMEL luminal fragment on ILVs to induce fibril nucleation. APOE exists as multiple glycosylated and sialylated glycoforms within cells and in plasma. The extent of glycosylation and sialylation are tissue and context specific. In terms of processing, glycated in plasma VLDL. Post-translationally, phosphorylated by FAM20C in the extracellular medium.

Its subcellular location is the secreted. It localises to the extracellular space. The protein resides in the extracellular matrix. It is found in the extracellular vesicle. The protein localises to the endosome. Its subcellular location is the multivesicular body. In terms of biological role, APOE is an apolipoprotein, a protein associating with lipid particles, that mainly functions in lipoprotein-mediated lipid transport between organs via the plasma and interstitial fluids. APOE is a core component of plasma lipoproteins and is involved in their production, conversion and clearance. Apolipoproteins are amphipathic molecules that interact both with lipids of the lipoprotein particle core and the aqueous environment of the plasma. As such, APOE associates with chylomicrons, chylomicron remnants, very low density lipoproteins (VLDL) and intermediate density lipoproteins (IDL) but shows a preferential binding to high-density lipoproteins (HDL). It also binds a wide range of cellular receptors including the LDL receptor/LDLR, the LDL receptor-related proteins LRP1, LRP2 and LRP8 and the very low-density lipoprotein receptor/VLDLR that mediate the cellular uptake of the APOE-containing lipoprotein particles. Finally, APOE also has a heparin-binding activity and binds heparan-sulfate proteoglycans on the surface of cells, a property that supports the capture and the receptor-mediated uptake of APOE-containing lipoproteins by cells. A main function of APOE is to mediate lipoprotein clearance through the uptake of chylomicrons, VLDLs, and HDLs by hepatocytes. APOE is also involved in the biosynthesis by the liver of VLDLs as well as their uptake by peripheral tissues ensuring the delivery of triglycerides and energy storage in muscle, heart and adipose tissues. By participating in the lipoprotein-mediated distribution of lipids among tissues, APOE plays a critical role in plasma and tissues lipid homeostasis. APOE is also involved in two steps of reverse cholesterol transport, the HDLs-mediated transport of cholesterol from peripheral tissues to the liver, and thereby plays an important role in cholesterol homeostasis. First, it is functionally associated with ABCA1 in the biogenesis of HDLs in tissues. Second, it is enriched in circulating HDLs and mediates their uptake by hepatocytes. APOE also plays an important role in lipid transport in the central nervous system, regulating neuron survival and sprouting. The chain is Apolipoprotein E (APOE) from Saimiri boliviensis boliviensis (Bolivian squirrel monkey).